The sequence spans 291 residues: Dihydroorotate dehydrogenase B (NAD(+)), catalytic subunit (291 aa).

Residues Ser17 and Lys42 to Thr43 each bind FMN. Substrate contacts are provided by residues Lys42, Asn67–Leu71, and Asn118. Asn118 serves as a coordination point for FMN. Residue Ser121 is the Nucleophile of the active site. The FMN site is built by Lys153 and Ile178. Asn179–Thr180 contributes to the substrate binding site. FMN-binding positions include Gly204, Gly230–Gly231, and Gly252–Thr253.

This sequence belongs to the dihydroorotate dehydrogenase family. Type 1 subfamily. As to quaternary structure, heterotetramer of 2 PyrK and 2 PyrD type B subunits. Requires FMN as cofactor.

The protein resides in the cytoplasm. It catalyses the reaction (S)-dihydroorotate + NAD(+) = orotate + NADH + H(+). It participates in pyrimidine metabolism; UMP biosynthesis via de novo pathway; orotate from (S)-dihydroorotate (NAD(+) route): step 1/1. Its function is as follows. Catalyzes the conversion of dihydroorotate to orotate with NAD(+) as electron acceptor. The sequence is that of Dihydroorotate dehydrogenase B (NAD(+)), catalytic subunit (pyrD) from Sulfolobus acidocaldarius (strain ATCC 33909 / DSM 639 / JCM 8929 / NBRC 15157 / NCIMB 11770).